The chain runs to 293 residues: 3-hydroxybutyrate-oligomer hydrolase (293 aa).

This sequence belongs to the AB hydrolase superfamily.

It is found in the cytoplasm. The catalysed reaction is (3R)-hydroxybutanoate pentamer + H2O = (3R)-hydroxybutanoate tetramer + (R)-3-hydroxybutanoate + H(+). The enzyme catalyses (3R)-hydroxybutanoate tetramer + H2O = (3R)-hydroxybutanoate trimer + (R)-3-hydroxybutanoate + H(+). It catalyses the reaction (3R)-hydroxybutanoate trimer + H2O = (3R)-hydroxybutanoate dimer + (R)-3-hydroxybutanoate + H(+). It carries out the reaction (3R)-hydroxybutanoate dimer + H2O = 2 (R)-3-hydroxybutanoate + H(+). The catalysed reaction is [(3R)-hydroxybutanoate](n) + H2O = [(3R)-hydroxybutanoate](n-1) + (R)-3-hydroxybutanoate + H(+). Functionally, catalyzes the degradation of various 3-hydroxybutyrate (3HB) oligomers at a high specific activity and artificial amorphous poly(3-hydroxybutyrate) (PHB) at a lower specific activity. Hydrolyzes the 3HB pentamer most efficiently than the tetramer, trimer and dimer. Does not hydrolyze native PHB granules and semicrystalline PHB. Participates in the mobilization of PHB along with other hydrolases. This Cupriavidus necator (strain ATCC 17699 / DSM 428 / KCTC 22496 / NCIMB 10442 / H16 / Stanier 337) (Ralstonia eutropha) protein is 3-hydroxybutyrate-oligomer hydrolase.